The primary structure comprises 148 residues: UPF0756 membrane protein YeaL (148 aa).

Transmembrane regions (helical) follow at residues 14–34, 51–71, 86–106, and 121–141; these read ALGF…LIIV, LTVG…SGTL, LVAI…ITLM, and VLGV…AGLV.

It belongs to the UPF0756 family.

It is found in the cell membrane. The sequence is that of UPF0756 membrane protein YeaL from Salmonella choleraesuis (strain SC-B67).